The primary structure comprises 226 residues: 2-C-methyl-D-erythritol 4-phosphate cytidylyltransferase (226 aa).

This sequence belongs to the IspD/TarI cytidylyltransferase family. IspD subfamily.

The enzyme catalyses 2-C-methyl-D-erythritol 4-phosphate + CTP + H(+) = 4-CDP-2-C-methyl-D-erythritol + diphosphate. It participates in isoprenoid biosynthesis; isopentenyl diphosphate biosynthesis via DXP pathway; isopentenyl diphosphate from 1-deoxy-D-xylulose 5-phosphate: step 2/6. Catalyzes the formation of 4-diphosphocytidyl-2-C-methyl-D-erythritol from CTP and 2-C-methyl-D-erythritol 4-phosphate (MEP). The protein is 2-C-methyl-D-erythritol 4-phosphate cytidylyltransferase of Bacillus cereus (strain ATCC 14579 / DSM 31 / CCUG 7414 / JCM 2152 / NBRC 15305 / NCIMB 9373 / NCTC 2599 / NRRL B-3711).